The chain runs to 415 residues: Interleukin-5 receptor subunit alpha (415 aa).

An N-terminal signal peptide occupies residues 1 to 17 (MVPVLLILVGALATLQA). Over 18–339 (DLLNHKKFLL…KERKSLVEWH (322 aa)) the chain is Extracellular. The Fibronectin type-III 1 domain occupies 29–120 (PPVNFTIKAT…VSAELKAPPG (92 aa)). Asparagine 32 and asparagine 128 each carry an N-linked (GlcNAc...) asparagine glycan. 2 cysteine pairs are disulfide-bonded: cysteine 131/cysteine 152 and cysteine 179/cysteine 193. Asparagine 213 and asparagine 241 each carry an N-linked (GlcNAc...) asparagine glycan. Residues 238–331 (PPRNVTVEIE…WSQPIYVGKE (94 aa)) form the Fibronectin type-III 2 domain. Cysteine 266 and cysteine 313 are oxidised to a cystine. Positions 319-323 (WGEWS) match the WSXWS motif motif. A helical transmembrane segment spans residues 340–361 (LIVLPTAACFVLLIFSLICRVC). Residues 362 to 415 (HLWTRLFPPVPAPKSNIKDLPVVTEYEKPSNETKIEVVHCVEEVGFEVMGNSTF) lie on the Cytoplasmic side of the membrane. The Box 1 motif signature appears at 367–375 (LFPPVPAPK).

As to quaternary structure, interacts with IL5. Interacts with CSF2RB. Interacts with JAK2. Interacts with SDCBP. Expressed on eosinophils and basophils. Also on B-cells.

It is found in the membrane. In terms of biological role, cell surface receptor that plays an important role in the survival, differentiation, and chemotaxis of eosinophils. Acts by forming a heterodimeric receptor with CSF2RB subunit and subsequently binding to interleukin-5. In unstimulated conditions, interacts constitutively with JAK2. Heterodimeric receptor activation leads to JAK2 stimulation and subsequent activation of the JAK-STAT pathway. This Mus musculus (Mouse) protein is Interleukin-5 receptor subunit alpha (Il5ra).